Reading from the N-terminus, the 562-residue chain is Dihydroxy-acid dehydratase (562 aa).

Position 80 (D80) interacts with Mg(2+). C121 contributes to the [2Fe-2S] cluster binding site. Mg(2+)-binding residues include D122 and K123. K123 bears the N6-carboxylysine mark. A [2Fe-2S] cluster-binding site is contributed by C194. Residue E446 participates in Mg(2+) binding. The active-site Proton acceptor is the S472.

This sequence belongs to the IlvD/Edd family. As to quaternary structure, homodimer. [2Fe-2S] cluster serves as cofactor. Requires Mg(2+) as cofactor.

It catalyses the reaction (2R)-2,3-dihydroxy-3-methylbutanoate = 3-methyl-2-oxobutanoate + H2O. The enzyme catalyses (2R,3R)-2,3-dihydroxy-3-methylpentanoate = (S)-3-methyl-2-oxopentanoate + H2O. It functions in the pathway amino-acid biosynthesis; L-isoleucine biosynthesis; L-isoleucine from 2-oxobutanoate: step 3/4. The protein operates within amino-acid biosynthesis; L-valine biosynthesis; L-valine from pyruvate: step 3/4. Functionally, functions in the biosynthesis of branched-chain amino acids. Catalyzes the dehydration of (2R,3R)-2,3-dihydroxy-3-methylpentanoate (2,3-dihydroxy-3-methylvalerate) into 2-oxo-3-methylpentanoate (2-oxo-3-methylvalerate) and of (2R)-2,3-dihydroxy-3-methylbutanoate (2,3-dihydroxyisovalerate) into 2-oxo-3-methylbutanoate (2-oxoisovalerate), the penultimate precursor to L-isoleucine and L-valine, respectively. The chain is Dihydroxy-acid dehydratase from Macrococcus caseolyticus (strain JCSC5402) (Macrococcoides caseolyticum).